Here is a 540-residue protein sequence, read N- to C-terminus: Chaperonin GroEL (540 aa).

Residues 29–32, 86–90, Gly413, 476–478, and Asp492 each bind ATP; these read TLGP, DGTTT, and NAA.

This sequence belongs to the chaperonin (HSP60) family. In terms of assembly, forms a cylinder of 14 subunits composed of two heptameric rings stacked back-to-back. Interacts with the co-chaperonin GroES.

It localises to the cytoplasm. The catalysed reaction is ATP + H2O + a folded polypeptide = ADP + phosphate + an unfolded polypeptide.. In terms of biological role, together with its co-chaperonin GroES, plays an essential role in assisting protein folding. The GroEL-GroES system forms a nano-cage that allows encapsulation of the non-native substrate proteins and provides a physical environment optimized to promote and accelerate protein folding. This is Chaperonin GroEL from Streptococcus pneumoniae (strain P1031).